A 2948-amino-acid polypeptide reads, in one-letter code: Transforming acidic coiled-coil-containing protein 2 (2948 aa).

The segment covering 1 to 30 (MGNENSTSDNQRTLSAQTPRSAQPPGNSQN) has biased composition (polar residues). Disordered stretches follow at residues 1-304 (MGNE…TDDL), 314-333 (RSNSGAAPEAEVNAASQESC), 392-453 (AAGG…MPVS), 465-785 (LVGL…PQGE), 825-964 (SSEK…VSPP), 985-1050 (CTGQ…QPDS), 1062-1154 (ALAP…GEAT), 1243-1274 (AAQRGAEDSGVKAVSSADPRAPGESPCPVGEP), 1296-1400 (QPGA…EQIA), 1427-1463 (PGEKAGAGRSAVGKDLTRPLGPEKLLDGPPGVDVTLL), 1493-1661 (ASDK…GERR), 1675-1705 (LGNQSTPAPPTGEVADTPLEPGKVAGAAGEA), 1741-1878 (VLPG…ESPT), 1907-2035 (HAGL…SSGT), and 2052-2460 (LEPR…ETPP). The segment covering 174 to 184 (GRERQPKEEGQ) has biased composition (basic and acidic residues). Phosphoserine is present on residues serine 197, serine 201, and serine 269. Valine 325 bears the Phosphothreonine mark. Serine 493 carries the post-translational modification Phosphoserine. The span at 496-507 (ERGEHLNTEQSH) shows a compositional bias: basic and acidic residues. A phosphoserine mark is found at serine 561, serine 571, and serine 575. The span at 604–629 (SKRDPEVGKDELSKPSSDAESRDHPS) shows a compositional bias: basic and acidic residues. Serine 758 carries the phosphoserine modification. The segment covering 911–926 (SDTPTSSPTDMVWESS) has biased composition (low complexity). Residue serine 962 is modified to Phosphoserine. Residues 985-996 (CTGQGPNKSQQA) are compositionally biased toward polar residues. Residue serine 1025 is modified to Phosphoserine. A phosphoserine mark is found at serine 1267 and serine 1313. Positions 1348 to 1357 (ATAPGAGAKA) are enriched in low complexity. The segment covering 1383-1400 (DPKQGTSGGVDTSSEQIA) has biased composition (polar residues). Serine 1562 bears the Phosphoserine mark. Composition is skewed to basic and acidic residues over residues 1801–1823 (DETHDPKLQHLAPEELHTDRESP) and 1834–1854 (PKKDAPRVMDKVTSDETRGAE). The span at 1862-1873 (ADDIIQPAAPAD) shows a compositional bias: low complexity. A compositionally biased stretch (basic and acidic residues) spans 1939-1948 (PAKDLSRSSD). The segment covering 1963-1976 (KAPPAPPPPPPEVI) has biased composition (pro residues). The residue at position 2072 (serine 2072) is a Phosphoserine. Residues 2074-2102 (DSVPISKSTLSRSLSLQASDFDGASSSGN) show a composition bias toward polar residues. A compositionally biased stretch (low complexity) spans 2114-2124 (STGSSSASSTL). Residues 2125 to 2141 (KRTKKPRPPSLKKKQTT) show a composition bias toward basic residues. 2 positions are modified to phosphoserine: serine 2161 and serine 2226. Threonine 2246 carries the post-translational modification Phosphothreonine. Serine 2256 carries the post-translational modification Phosphoserine. A compositionally biased stretch (basic and acidic residues) spans 2265–2275 (LEFDYSEDKSS). Positions 2288–2305 (KIGKKPVAKMPLRRPKMK) are enriched in basic residues. The SPAZ domain maps to 2315-2403 (PASPPRSPAE…SPASFEIPAS (89 aa)). A phosphoserine mark is found at serine 2317, serine 2321, serine 2359, serine 2389, serine 2392, serine 2394, and serine 2403. Over residues 2348–2368 (NPFSSTSKMQESPKLPQQSYN) the composition is skewed to polar residues. Residues 2382–2395 (KTSSKTPSSPSKSP) show a composition bias toward low complexity. Threonine 2430, threonine 2451, threonine 2455, and threonine 2458 each carry phosphothreonine. 2 positions are modified to phosphoserine: serine 2512 and serine 2534. A Phosphothreonine modification is found at threonine 2553. Positions 2555–2577 (QESPVKSSPVRMSESPTPCSGSS) are disordered. Residues serine 2557 and serine 2569 each carry the phosphoserine modification. A compositionally biased stretch (polar residues) spans 2568 to 2577 (ESPTPCSGSS). Phosphothreonine is present on threonine 2625. Coiled coils occupy residues 2675–2703 (AQKLQEELEFAIMRIEALKLARQIALASR) and 2746–2947 (DLDS…KMGK).

Belongs to the TACC family. Interacts with CCDC100/CEP120. Interacts with microtubules. Interacts with YEATS4, GCN5L2 and PCAF. Phosphorylated by TTK; which is required for localization in centrosome. In terms of tissue distribution, strongly expressed in heart, skeletal muscle, brain, prostate, thyroid and trachea.

The protein resides in the cytoplasm. It localises to the nucleus. It is found in the cytoskeleton. The protein localises to the microtubule organizing center. Its subcellular location is the centrosome. Its function is as follows. Plays a role in the microtubule-dependent coupling of the nucleus and the centrosome. Involved in the processes that regulate centrosome-mediated interkinetic nuclear migration (INM) of neural progenitors. May play a role in organizing centrosomal microtubules. May act as a tumor suppressor protein. May represent a tumor progression marker. The chain is Transforming acidic coiled-coil-containing protein 2 (TACC2) from Homo sapiens (Human).